We begin with the raw amino-acid sequence, 451 residues long: L,D-transpeptidase 5 (451 aa).

Residues 263–384 enclose the L,D-TPase catalytic domain; the sequence is QVVKAEVSSH…AVYGDPVEVT (122 aa). Substrate-binding positions include Tyr323 and 337 to 338; that span reads NG. His342 functions as the Proton donor/acceptor in the catalytic mechanism. Cys360 serves as the catalytic Nucleophile. Residue Asn362 participates in substrate binding. Residues 417 to 451 are disordered; sequence AAKPAATQIPVTAPVTPSDAPTPSGTPTTTNGPGG. The span at 437–451 shows a compositional bias: low complexity; the sequence is PTPSGTPTTTNGPGG.

Its pathway is cell wall biogenesis; peptidoglycan biosynthesis. Its activity is regulated as follows. In contrast to other LDT paralogs, LdtMt5 is not inactivated by the beta-lactam carbapenems; beta-lactam carbapenems form covalent adducts with other LDT paralogs but the formation of covalent adducts was not detected for LdtMt5. Generates 3-&gt;3 cross-links in peptidoglycan, catalyzing the cleavage of the mDap(3)-D-Ala(4) bond of a tetrapeptide donor stem and the formation of a bond between the carbonyl of mDap(3) of the donor stem and the side chain of mDap(3) of the acceptor stem. Is specific for donor substrates containing a stem tetrapeptide since it cannot use pentapeptide stems. The chain is L,D-transpeptidase 5 (lprQ) from Mycobacterium tuberculosis (strain ATCC 25618 / H37Rv).